The chain runs to 106 residues: ATP-dependent Clp protease adapter protein ClpS (106 aa).

The protein belongs to the ClpS family. As to quaternary structure, binds to the N-terminal domain of the chaperone ClpA.

Involved in the modulation of the specificity of the ClpAP-mediated ATP-dependent protein degradation. The polypeptide is ATP-dependent Clp protease adapter protein ClpS (Cronobacter sakazakii (strain ATCC BAA-894) (Enterobacter sakazakii)).